Consider the following 173-residue polypeptide: Endosomal/vacuolar adapter protein YPT35 (173 aa).

Residues 40–173 (ERAFVTNCTI…LVIQFLRPRK (134 aa)) form the PX domain.

Belongs to the YPT35 family.

It is found in the endosome membrane. The protein localises to the vacuole membrane. In terms of biological role, recruits the lipid transfer protein VPS13 to endosomal and vacuolar membranes. This Candida glabrata (strain ATCC 2001 / BCRC 20586 / JCM 3761 / NBRC 0622 / NRRL Y-65 / CBS 138) (Yeast) protein is Endosomal/vacuolar adapter protein YPT35 (YPT35).